Here is a 190-residue protein sequence, read N- to C-terminus: MDRKEQKAIIEGLLFVAGDEGIYPEQIAKVLEVEVEEVLNSIEEMQKECEGSNRGLQIVQYAKVYRFATKKEHASYYQKLIDTPTAASLSQAALETLAIVAYRQPITRTEMEEIRGVKTDKALQTLVSHLLIKETGRAEGPGRPILYGTTKEFLDTFGLKTLDDLPPLSEENEQMNEADLFFGSLQELSK.

It belongs to the ScpB family. As to quaternary structure, homodimer. Homodimerization may be required to stabilize the binding of ScpA to the Smc head domains. Component of a cohesin-like complex composed of ScpA, ScpB and the Smc homodimer, in which ScpA and ScpB bind to the head domain of Smc. The presence of the three proteins is required for the association of the complex with DNA.

Its subcellular location is the cytoplasm. Its function is as follows. Participates in chromosomal partition during cell division. May act via the formation of a condensin-like complex containing Smc and ScpA that pull DNA away from mid-cell into both cell halves. The polypeptide is Segregation and condensation protein B (Bacillus mycoides (strain KBAB4) (Bacillus weihenstephanensis)).